A 292-amino-acid polypeptide reads, in one-letter code: UPF0761 membrane protein Ping_3482 (292 aa).

6 helical membrane passes run 43–63 (LLSI…FPVF), 100–120 (MSMM…STID), 139–159 (FTIY…SLAL), 179–199 (LLSL…YTLV), 209–229 (ALIG…LFRL), and 243–263 (ALAV…IVLI).

The protein belongs to the UPF0761 family.

The protein localises to the cell inner membrane. This chain is UPF0761 membrane protein Ping_3482, found in Psychromonas ingrahamii (strain DSM 17664 / CCUG 51855 / 37).